The following is a 219-amino-acid chain: Ras-related protein Rab-32A (219 aa).

A GTP-binding site is contributed by 22 to 29 (GDIGTGKT). The Effector region signature appears at 44 to 52 (YKSTIGVDF). GTP contacts are provided by residues 71 to 75 (DIAGQ) and 134 to 137 (NKCD). A disordered region spans residues 192–219 (NQPIEGTIQPGDLNKQPQPTSTGPSCCK). Polar residues predominate over residues 206–219 (KQPQPTSTGPSCCK). Residues C217 and C218 are each lipidated (S-geranylgeranyl cysteine).

Belongs to the small GTPase superfamily. Rab family.

The sequence is that of Ras-related protein Rab-32A (rab32A) from Dictyostelium discoideum (Social amoeba).